The sequence spans 234 residues: Coiled-coil domain-containing protein 194 (234 aa).

Positions 1–42 (MAEPGPEPGRAWRVLALCGVAVFLAAAAAGGALVAWNLAASA) are cleaved as a signal peptide. Disordered regions lie at residues 44–67 (RGPR…PGVD) and 187–234 (VLEA…RARG). A coiled-coil region spans residues 66-163 (VDDLRRRLAE…TRRLDEALRR (98 aa)). Over residues 187–196 (VLEAEMSPQR) the composition is skewed to low complexity. Basic residues predominate over residues 197–217 (RVPRPRPRSGSRPRPSPRSRS).

This chain is Coiled-coil domain-containing protein 194, found in Homo sapiens (Human).